Here is a 619-residue protein sequence, read N- to C-terminus: Dihydroxy-acid dehydratase (619 aa).

Asp81 serves as a coordination point for Mg(2+). Residue Cys122 coordinates [2Fe-2S] cluster. Asp123 and Lys124 together coordinate Mg(2+). Lys124 is modified (N6-carboxylysine). [2Fe-2S] cluster is bound at residue Cys195. Glu492 provides a ligand contact to Mg(2+). Ser518 (proton acceptor) is an active-site residue.

This sequence belongs to the IlvD/Edd family. As to quaternary structure, homodimer. It depends on [2Fe-2S] cluster as a cofactor. Requires Mg(2+) as cofactor.

It catalyses the reaction (2R)-2,3-dihydroxy-3-methylbutanoate = 3-methyl-2-oxobutanoate + H2O. The enzyme catalyses (2R,3R)-2,3-dihydroxy-3-methylpentanoate = (S)-3-methyl-2-oxopentanoate + H2O. Its pathway is amino-acid biosynthesis; L-isoleucine biosynthesis; L-isoleucine from 2-oxobutanoate: step 3/4. It participates in amino-acid biosynthesis; L-valine biosynthesis; L-valine from pyruvate: step 3/4. In terms of biological role, functions in the biosynthesis of branched-chain amino acids. Catalyzes the dehydration of (2R,3R)-2,3-dihydroxy-3-methylpentanoate (2,3-dihydroxy-3-methylvalerate) into 2-oxo-3-methylpentanoate (2-oxo-3-methylvalerate) and of (2R)-2,3-dihydroxy-3-methylbutanoate (2,3-dihydroxyisovalerate) into 2-oxo-3-methylbutanoate (2-oxoisovalerate), the penultimate precursor to L-isoleucine and L-valine, respectively. This is Dihydroxy-acid dehydratase from Synechococcus elongatus (strain ATCC 33912 / PCC 7942 / FACHB-805) (Anacystis nidulans R2).